We begin with the raw amino-acid sequence, 75 residues long: DNA-directed RNA polymerase subunit omega (75 aa).

This sequence belongs to the RNA polymerase subunit omega family. As to quaternary structure, in cyanobacteria the RNAP catalytic core is composed of 2 alpha, 1 beta, 1 beta', 1 gamma and 1 omega subunit. When a sigma factor is associated with the core the holoenzyme is formed, which can initiate transcription.

It catalyses the reaction RNA(n) + a ribonucleoside 5'-triphosphate = RNA(n+1) + diphosphate. Functionally, promotes RNA polymerase assembly. Latches the N- and C-terminal regions of the beta' subunit thereby facilitating its interaction with the beta and alpha subunits. This chain is DNA-directed RNA polymerase subunit omega, found in Cyanothece sp. (strain PCC 7425 / ATCC 29141).